Here is a 122-residue protein sequence, read N- to C-terminus: Acidic phospholipase A2 (122 aa).

7 disulfides stabilise this stretch: C26-C115, C28-C44, C43-C95, C49-C122, C50-C88, C57-C81, and C75-C86. Ca(2+)-binding residues include Y27, G29, and G31. The active site involves H47. D48 provides a ligand contact to Ca(2+). Residue D89 is part of the active site.

This sequence belongs to the phospholipase A2 family. Group II subfamily. D49 sub-subfamily. Ca(2+) is required as a cofactor. In terms of processing, contains 7 disulfide bonds. Expressed by the venom gland.

The protein resides in the secreted. The enzyme catalyses a 1,2-diacyl-sn-glycero-3-phosphocholine + H2O = a 1-acyl-sn-glycero-3-phosphocholine + a fatty acid + H(+). Functionally, snake venom phospholipase A2 (PLA2) that displays low systemic toxicity and causes severe symptoms only at very high concentrations (15 mg/kg). Has neither coagulant nor anticoagulant activity. PLA2 catalyzes the calcium-dependent hydrolysis of the 2-acyl groups in 3-sn-phosphoglycerides. The sequence is that of Acidic phospholipase A2 from Bothrops ammodytoides (Yararanata).